A 599-amino-acid chain; its full sequence is Dachshund homolog 2 (599 aa).

Positions 69–155 (RMVDMHGMKV…LITRKDFETL (87 aa)) are DACHbox-N. 3 disordered regions span residues 166-186 (RQMTRKQAVNSSRPGRPPKRS), 237-280 (LQGN…GPQH), and 370-409 (RIPESPSPAPSLEENHRPGSQTSSHTSSSVSSSPSQMDHH). The segment covering 237-262 (LQGNGSQNGTESEPDDLNSNTGGSES) has biased composition (polar residues). Residues 389 to 405 (SQTSSHTSSSVSSSPSQ) show a composition bias toward low complexity. A DACHbox-C region spans residues 453–533 (SSVETLLTNI…KTKRKLQEAL (81 aa)). The stretch at 459–554 (LTNIQGLLKV…QALKQATTSD (96 aa)) forms a coiled coil.

Belongs to the DACH/dachshund family. As to quaternary structure, interacts with SIX6 and EYA2.

The protein localises to the nucleus. Functionally, transcription factor that is involved in regulation of organogenesis. Seems to be a regulator for SIX1 and SIX6. Seems to act as a corepressor of SIX6 in regulating proliferation by directly repressing cyclin-dependent kinase inhibitors, including the p27Kip1 promoter. Is recruited with SIX6 to the p27Kip1 promoter in embryonal retina. SIX6 corepression also seems to involve NCOR1, TBL1, HDAC1 and HDAC3. May be involved together with PAX3, SIX1, and EYA2 in regulation of myogenesis. In the developing somite, expression of DACH2 and PAX3 is regulated by the overlying ectoderm, and DACH2 and PAX3 positively regulate each other's expression. Probably binds to DNA via its DACHbox-N domain. This chain is Dachshund homolog 2 (DACH2), found in Homo sapiens (Human).